Reading from the N-terminus, the 152-residue chain is Protein Turandot X (152 aa).

An N-terminal signal peptide occupies residues 1–22 (MGFYISSLLICVFLGIVRFASA).

Belongs to the Turandot family.

The protein localises to the secreted. Functionally, a humoral factor that may play a role in stress tolerance. In Drosophila erecta (Fruit fly), this protein is Protein Turandot X.